A 129-amino-acid chain; its full sequence is MNIIQTFEAEQIARLVSERPVPEFVPGDTLRVLVKVVEGERTRTQAFEGVCIARSNRGVNSNFTIRKISYGEGVERVFPLYSPTIAEIQVVRRGDVRRAKLYYLRGRSGKSARIAEKARSTTTETAAAE.

The protein belongs to the bacterial ribosomal protein bL19 family.

Its function is as follows. This protein is located at the 30S-50S ribosomal subunit interface and may play a role in the structure and function of the aminoacyl-tRNA binding site. In Granulibacter bethesdensis (strain ATCC BAA-1260 / CGDNIH1), this protein is Large ribosomal subunit protein bL19.